A 395-amino-acid polypeptide reads, in one-letter code: E3 ubiquitin-protein ligase RDUF1 (395 aa).

Disordered stretches follow at residues 1-22 and 107-130; these read MMPN…TTTT and PVIV…EGDG. Positions 9–22 are enriched in low complexity; sequence TITPTTESTTTTTT. A compositionally biased stretch (basic and acidic residues) spans 121 to 130; the sequence is ERVENEEGDG. An RING-type; atypical zinc finger spans residues 215–256; that stretch reads CAVCTEVFEAGIEGREMPCKHIFHGDCIVPWLSIRNSCPVCR.

In terms of tissue distribution, expressed in root tips, leaf tips, junction of carpels and pedicels, stigma, anthers, pollen, vasculature of sepals and petals, immature seeds and embryos.

It is found in the cytoplasm. Its subcellular location is the cytosol. The protein resides in the nucleus. It catalyses the reaction S-ubiquitinyl-[E2 ubiquitin-conjugating enzyme]-L-cysteine + [acceptor protein]-L-lysine = [E2 ubiquitin-conjugating enzyme]-L-cysteine + N(6)-ubiquitinyl-[acceptor protein]-L-lysine.. It functions in the pathway protein modification; protein ubiquitination. Its function is as follows. E3 ubiquitin-protein ligase involved in the positive regulation of abscisic acid-dependent drought stress responses. Involved in the positive regulation of responses to salt and osmotic stresses during seed germination and early seedling development. Possesses E3 ubiquitin ligase activity in vitro. This is E3 ubiquitin-protein ligase RDUF1 from Arabidopsis thaliana (Mouse-ear cress).